The chain runs to 214 residues: Thymidylate kinase (214 aa).

9–16 (GIEGCGKT) contributes to the ATP binding site.

Belongs to the thymidylate kinase family.

It catalyses the reaction dTMP + ATP = dTDP + ADP. Its function is as follows. Phosphorylation of dTMP to form dTDP in both de novo and salvage pathways of dTTP synthesis. This Geotalea daltonii (strain DSM 22248 / JCM 15807 / FRC-32) (Geobacter daltonii) protein is Thymidylate kinase.